Consider the following 400-residue polypeptide: Queuine tRNA-ribosyltransferase catalytic subunit (400 aa).

Asp-89 functions as the Proton acceptor in the catalytic mechanism. Substrate-binding positions include 89–93 (DSGGF), Asp-143, Gln-185, and Gly-212. Residues 243 to 249 (GVGFPVD) form an RNA binding region. Asp-262 (nucleophile) is an active-site residue. The RNA binding; important for wobble base 34 recognition stretch occupies residues 267-271 (TRTAR). Zn(2+) is bound by residues Cys-301, Cys-303, Cys-306, and His-331.

It belongs to the queuine tRNA-ribosyltransferase family. Heterodimer of a catalytic subunit and an accessory subunit. Zn(2+) is required as a cofactor.

It is found in the cytoplasm. The enzyme catalyses guanosine(34) in tRNA + queuine = queuosine(34) in tRNA + guanine. Its function is as follows. Catalytic subunit of the queuine tRNA-ribosyltransferase (TGT) that catalyzes the base-exchange of a guanine (G) residue with queuine (Q) at position 34 (anticodon wobble position) in tRNAs with GU(N) anticodons (tRNA-Asp, -Asn, -His and -Tyr), resulting in the hypermodified nucleoside queuosine (7-(((4,5-cis-dihydroxy-2-cyclopenten-1-yl)amino)methyl)-7-deazaguanosine). Catalysis occurs through a double-displacement mechanism. The nucleophile active site attacks the C1' of nucleotide 34 to detach the guanine base from the RNA, forming a covalent enzyme-RNA intermediate. The proton acceptor active site deprotonates the incoming queuine, allowing a nucleophilic attack on the C1' of the ribose to form the product. This chain is Queuine tRNA-ribosyltransferase catalytic subunit, found in Caenorhabditis elegans.